A 510-amino-acid chain; its full sequence is 2,3-bisphosphoglycerate-independent phosphoglycerate mutase (510 aa).

D14 and S64 together coordinate Mn(2+). The Phosphoserine intermediate role is filled by S64. Substrate contacts are provided by residues H125, R155–D156, R187, R193, R259–R262, and K332. 5 residues coordinate Mn(2+): D399, H403, D440, H441, and H459.

Belongs to the BPG-independent phosphoglycerate mutase family. As to quaternary structure, monomer. Mn(2+) is required as a cofactor.

The catalysed reaction is (2R)-2-phosphoglycerate = (2R)-3-phosphoglycerate. The protein operates within carbohydrate degradation; glycolysis; pyruvate from D-glyceraldehyde 3-phosphate: step 3/5. Its function is as follows. Catalyzes the interconversion of 2-phosphoglycerate and 3-phosphoglycerate. The sequence is that of 2,3-bisphosphoglycerate-independent phosphoglycerate mutase from Pseudomonas savastanoi pv. phaseolicola (strain 1448A / Race 6) (Pseudomonas syringae pv. phaseolicola (strain 1448A / Race 6)).